The chain runs to 116 residues: Iron-sulfur cluster insertion protein ErpA (116 aa).

3 residues coordinate iron-sulfur cluster: cysteine 44, cysteine 108, and cysteine 110.

The protein belongs to the HesB/IscA family. Homodimer. Iron-sulfur cluster is required as a cofactor.

Required for insertion of 4Fe-4S clusters for at least IspG. The protein is Iron-sulfur cluster insertion protein ErpA of Shewanella halifaxensis (strain HAW-EB4).